Reading from the N-terminus, the 186-residue chain is NADH-quinone oxidoreductase subunit B 2 (186 aa).

Positions 1-27 are disordered; that stretch reads MPSFTQPHSAPRNFQFPGQQRQGDPTM. The [4Fe-4S] cluster site is built by Cys65, Cys66, Cys130, and Cys160.

Belongs to the complex I 20 kDa subunit family. NDH-1 is composed of 14 different subunits. Subunits NuoB, C, D, E, F, and G constitute the peripheral sector of the complex. [4Fe-4S] cluster serves as cofactor.

It localises to the cell inner membrane. The enzyme catalyses a quinone + NADH + 5 H(+)(in) = a quinol + NAD(+) + 4 H(+)(out). Its function is as follows. NDH-1 shuttles electrons from NADH, via FMN and iron-sulfur (Fe-S) centers, to quinones in the respiratory chain. The immediate electron acceptor for the enzyme in this species is believed to be ubiquinone. Couples the redox reaction to proton translocation (for every two electrons transferred, four hydrogen ions are translocated across the cytoplasmic membrane), and thus conserves the redox energy in a proton gradient. The polypeptide is NADH-quinone oxidoreductase subunit B 2 (Rhizobium etli (strain ATCC 51251 / DSM 11541 / JCM 21823 / NBRC 15573 / CFN 42)).